Consider the following 258-residue polypeptide: uncharacterized protein (258 aa).

3 Solcar repeats span residues 9–78, 81–160, and 165–246; these read KPIL…AKAR, PGVR…FKKK, and DHVF…VKSH. 6 helical membrane passes run 11–31, 53–73, 87–107, 139–159, 171–191, and 218–239; these read ILVG…LSTI, GLSS…FVYE, LVSA…AEVV, MCGR…QFKK, PKGA…LDVI, and FEKG…YLGT.

The protein belongs to the mitochondrial carrier (TC 2.A.29) family.

It is found in the mitochondrion inner membrane. This is an uncharacterized protein from Schizosaccharomyces pombe (strain 972 / ATCC 24843) (Fission yeast).